Reading from the N-terminus, the 724-residue chain is NAD(+) hydrolase SARM1 (724 aa).

A mitochondrion-targeting transit peptide spans 1 to 27 (MVLTLLFSAYKLCRFFIMSGPRPGADR). Residues 60–100 (EVQGALERSLPELQQALSELKQASAAQAVGAGLAEVFQLVE) form an ARM 1 repeat. NAD(+)-binding positions include W103, R110, 149–157 (EQILVAENR), and 190–193 (HMFK). 7 ARM repeats span residues 114 to 153 (QGLC…QILV), 155 to 193 (ENRD…HMFK), 196 to 235 (EETC…NCAL), 237 to 280 (GGQT…LATN), 281 to 314 (KEVE…CLVD), 315 to 354 (ASDT…AEAA), and 359 to 402 (QGKT…EEVP). 2 consecutive SAM domains span residues 412–476 (WKEA…LKTF) and 486–548 (NLAD…MLHS). 2 positions are modified to phosphoserine: S548 and S558. The region spanning 560–703 (DTPDVFISYR…KIIRFLQGRP (144 aa)) is the TIR domain. Residues 569–570 (RR) and E599 contribute to the NAD(+) site. E642 is an active-site residue. Polar residues predominate over residues 703–717 (PSQDSSAGSDTSLEG). The segment at 703–724 (PSQDSSAGSDTSLEGATSMGLP) is disordered.

Belongs to the SARM1 family. In terms of assembly, homooctamer; forms an octameric ring via SAM domains. Interacts with TICAM1/TRIF and thereby interferes with TICAM1/TRIF function. Interacts with MAPK10/JNK3 and SDC2 (via cytoplasmic domain). Phosphorylation at Ser-548 by JNK kinases (MAPK8, MAPK9 and /or MAPK10) enhance the NAD(+) hydrolase (NADase) activity. Phosphorylation at Ser-548 and subsequent activation takes place in response to oxidative stress conditions and inhibits mitochondrial respiration. Phosphorylation at Ser-548 increases in response to cerebral ischemia/reperfusion (I/R) injury.

Its subcellular location is the cytoplasm. The protein localises to the cell projection. It is found in the axon. It localises to the dendrite. The protein resides in the synapse. Its subcellular location is the mitochondrion. It catalyses the reaction NAD(+) + H2O = ADP-D-ribose + nicotinamide + H(+). The catalysed reaction is NAD(+) = cyclic ADP-beta-D-ribose + nicotinamide + H(+). The enzyme catalyses NADP(+) + H2O = ADP-D-ribose 2'-phosphate + nicotinamide + H(+). Its activity is regulated as follows. Autoinhibited: in the inactive state, the enzymatic TIR domain is held apart by the autoinhibiting ARM repeats. NAD(+)-binding to ARM repeats maintains an inactive state by promoting interaction between ARM repeats and the TIR domain, thereby facilitating inhibition of the enzymatic TIR domain. Following activation, possibly by nicotinamide mononucleotide (NMN), auto-inhibitory interactions are released, allowing self-association of the TIR domains and subsequent activation of the NAD(+) hydrolase (NADase) activity. Self-association of TIR domains is facilitated by the octamer of SAM domains. Functionally, NAD(+) hydrolase, which plays a key role in axonal degeneration following injury by regulating NAD(+) metabolism. Acts as a negative regulator of MYD88- and TRIF-dependent toll-like receptor signaling pathway by promoting Wallerian degeneration, an injury-induced form of programmed subcellular death which involves degeneration of an axon distal to the injury site. Wallerian degeneration is triggered by NAD(+) depletion: in response to injury, SARM1 is activated and catalyzes cleavage of NAD(+) into ADP-D-ribose (ADPR), cyclic ADPR (cADPR) and nicotinamide; NAD(+) cleavage promoting cytoskeletal degradation and axon destruction. Also able to hydrolyze NADP(+), but not other NAD(+)-related molecules. Can activate neuronal cell death in response to stress. Regulates dendritic arborization through the MAPK4-JNK pathway. Involved in innate immune response: inhibits both TICAM1/TRIF- and MYD88-dependent activation of JUN/AP-1, TRIF-dependent activation of NF-kappa-B and IRF3, and the phosphorylation of MAPK14/p38. The sequence is that of NAD(+) hydrolase SARM1 from Rattus norvegicus (Rat).